The chain runs to 224 residues: Octanoyltransferase (224 aa).

The region spanning 29 to 224 is the BPL/LPL catalytic domain; the sequence is EATPDALWIC…GQKLATYLAP (196 aa). Residues 68 to 75, 157 to 159, and 170 to 172 each bind substrate; these read RGGQVTFH, ALG, and GVA. Cysteine 188 serves as the catalytic Acyl-thioester intermediate.

The protein belongs to the LipB family.

The protein resides in the cytoplasm. It catalyses the reaction octanoyl-[ACP] + L-lysyl-[protein] = N(6)-octanoyl-L-lysyl-[protein] + holo-[ACP] + H(+). It participates in protein modification; protein lipoylation via endogenous pathway; protein N(6)-(lipoyl)lysine from octanoyl-[acyl-carrier-protein]: step 1/2. Functionally, catalyzes the transfer of endogenously produced octanoic acid from octanoyl-acyl-carrier-protein onto the lipoyl domains of lipoate-dependent enzymes. Lipoyl-ACP can also act as a substrate although octanoyl-ACP is likely to be the physiological substrate. In Polaromonas naphthalenivorans (strain CJ2), this protein is Octanoyltransferase.